Consider the following 193-residue polypeptide: Achaete-scute homolog 2 (193 aa).

Disordered regions lie at residues 1–58 (MDSR…RNER) and 128–177 (PLPR…GALS). One can recognise a bHLH domain in the interval 50–102 (AAVARRNERERNRVKLVNLGFQALRQHVPHGGASKKLSKVETLRSAVEYIRAL). The segment covering 128–152 (PLPRAPSGTPATAASPSCASSSPGR) has biased composition (low complexity).

Efficient DNA binding requires dimerization with another basic helix-loop-helix (bHLH) protein. Forms heterodimers with bHLH transcription factor TCF3. May not heterodimerise with bHLH protein HAND1. As to expression, expressed in placenta.

The protein localises to the nucleus. Its function is as follows. Transcription factor. Binds to E-box motifs 5'-CANNTG-3' in the regulatory elements of target genes, probably as a heterodimer with another basic helix-loop-helix (bHLH) protein such as the transcription factor TCF3. May bind both open and closed chromatin, acting as a pioneer transcription factor to allow other factors to bind and activate lineage-specific genes. Required during post-implantation development for the generation of some differentiated trophoblast cell types. Transcriptional activity of ASCL2 may be antagonised in a subset of trophoblast cells by bHLH transcription factor HAND1, perhaps by competing for dimerization with other bHLH proteins. Involved in differentiation and function of follicular T-helper (Tfh) cells, thereby playing a role in germinal center responses; probably modulates expression of genes involved in Tfh cell function, such as BCL6. May also act as a suppressor of Th1-, Th2- and Th17-cell differentiation. Induces the formation of stem cells in intestinal crypts in vitro, synergistically activating transcription of target genes, such as SOX9, together with TCF4/beta-catenin. May form a bistable transcriptional switch, controlling expression of its own gene together with Wnt/R-spondin signaling, and thereby maintaining stem cell characteristics. Modulates expression of target genes, including perhaps down-regulating EGR1/Krox24 and chemokine CXCL10/Mob-1 and up-regulating CXCR4 and CDKN1C/p57kip2, in Schwann cells. May play a role in reducing proliferation of Schwann cells, perhaps acting via modulation of expression of CDKN1C. May be dispensable for blastocyst formation and later embryonic function. May be involved in the determination of neuronal precursors. The sequence is that of Achaete-scute homolog 2 (ASCL2) from Bos taurus (Bovine).